The sequence spans 163 residues: Protein EARLY RESPONSIVE TO DEHYDRATION 15 (163 aa).

Positions 10 to 20 match the PAM2-like motif; that stretch reads TLNPDAPLFIP. The disordered stretch occupies residues 118 to 163; it reads NGEMVKKSSGNRSPRSIVEPAKYAEKPAKWGNQRVAAAPRNIHQPR.

In terms of assembly, interacts with PAB2, PAB4 and PAB8. Interacts with MPC. As to expression, expressed in cauline leaves, stems, rosette leaves, immature siliques and primary inflorescences.

It is found in the cytoplasm. Its function is as follows. Central component of stress responses that interacts with poly(A)-binding proteins. Negative regulator of abscisic acid (ABA) responses, including resistance to drought and freezing as well as stomatal closure regulation. Mediates resistance to the bacterial necrotroph pathogen Erwinia carotovora subsp. carotovora and promotes the induction of marker genes for systemic acquired resistance (SAR). The protein is Protein EARLY RESPONSIVE TO DEHYDRATION 15 (ERD15) of Arabidopsis thaliana (Mouse-ear cress).